The chain runs to 127 residues: Large ribosomal subunit protein bL17 (127 aa).

It belongs to the bacterial ribosomal protein bL17 family. As to quaternary structure, part of the 50S ribosomal subunit. Contacts protein L32.

This Fervidobacterium nodosum (strain ATCC 35602 / DSM 5306 / Rt17-B1) protein is Large ribosomal subunit protein bL17.